A 558-amino-acid chain; its full sequence is Galactoside 2-alpha-L-fucosyltransferase (558 aa).

The Cytoplasmic portion of the chain corresponds to Met1 to Arg43. The chain crosses the membrane as a helical; Signal-anchor for type II membrane protein span at residues Thr44–Gln64. The Lumenal portion of the chain corresponds to His65–Val558. Residues Asn88 and Asn504 are each glycosylated (N-linked (GlcNAc...) asparagine).

Belongs to the glycosyltransferase 37 family. As to quaternary structure, homodimer. Interacts with MUR3, XLT2, XXT2 and XXT5. In terms of tissue distribution, expressed in roots, stems, leaves, flowers, siliques and seedlings.

Its subcellular location is the golgi apparatus. The protein resides in the golgi stack membrane. The protein localises to the golgi apparatus membrane. Its function is as follows. Involved in cell wall biosynthesis. Is both necessary and sufficient for the addition of the terminal fucosyl residue on xyloglucan side chains, but is not involved in the fucosylation of other cell wall components. Associates with other xyloglucan-synthesizing enzymes to form multiprotein complexes for xyloglucan synthesis in the Golgi. The protein is Galactoside 2-alpha-L-fucosyltransferase (FUT1) of Arabidopsis thaliana (Mouse-ear cress).